Consider the following 400-residue polypeptide: Acetate kinase (400 aa).

A Mg(2+)-binding site is contributed by asparagine 10. Lysine 17 serves as a coordination point for ATP. Arginine 91 is a binding site for substrate. Catalysis depends on aspartate 150, which acts as the Proton donor/acceptor. Residues histidine 210–glycine 214, aspartate 285–arginine 287, and glycine 333–asparagine 337 each bind ATP. Position 387 (glutamate 387) interacts with Mg(2+).

This sequence belongs to the acetokinase family. As to quaternary structure, homodimer. It depends on Mg(2+) as a cofactor. The cofactor is Mn(2+).

The protein resides in the cytoplasm. It catalyses the reaction acetate + ATP = acetyl phosphate + ADP. The protein operates within metabolic intermediate biosynthesis; acetyl-CoA biosynthesis; acetyl-CoA from acetate: step 1/2. Functionally, catalyzes the formation of acetyl phosphate from acetate and ATP. Can also catalyze the reverse reaction. The sequence is that of Acetate kinase from Proteus mirabilis (strain HI4320).